The chain runs to 791 residues: RAS guanyl-releasing protein 1 (791 aa).

One can recognise an N-terminal Ras-GEF domain in the interval 49–172 (LGKLSKGASL…RLIDTAQINS (124 aa)). Residues 53–106 (SKGASLDDLIQMCIQAFDLDGNMGQNSELLQIMLTMHGFLLPSTELLMKLRTLY) are ras exchanger motif region; required for transforming activity. In terms of domain architecture, Ras-GEF spans 201-432 (EPQELAEHLT…YELSYAREPR (232 aa)). EF-hand domains are found at residues 466–501 (HVQR…FPFS) and 502–528 (FCVM…ASSI). Aspartate 479, aspartate 481, aspartate 483, tyrosine 485, glutamate 490, aspartate 506, aspartate 508, glutamate 510, and glutamate 517 together coordinate Ca(2+). The Phorbol-ester/DAG-type zinc-finger motif lies at 537–587 (LHNFQETTYLRPTFCDNCAGFLWGVIKQGYRCKDCGMNCHKQCKELVVFEC). Residues 683–695 (QVPSPQRSRTPGL) show a composition bias toward polar residues. The tract at residues 683-715 (QVPSPQRSRTPGLTSHLPISPMPSPCPSPVPTR) is disordered. Pro residues predominate over residues 702-712 (SPMPSPCPSPV). A coiled-coil region spans residues 728 to 785 (IRKARAELRGGKAGIQELEKEKALLKEENTTLKIQLKDAQRRVETLRAELRKYVLDSD).

It belongs to the RASGRP family.

It is found in the cytoplasm. It localises to the cytosol. Its subcellular location is the cell membrane. The protein resides in the golgi apparatus membrane. The protein localises to the endoplasmic reticulum membrane. With respect to regulation, regulated by F-actin polymerization and probably by calcium. Its function is as follows. Functions as a diacylglycerol (DAG)-regulated nucleotide exchange factor specifically activating Ras through the exchange of bound GDP for GTP. The protein is RAS guanyl-releasing protein 1 (rasgrp1) of Xenopus tropicalis (Western clawed frog).